Reading from the N-terminus, the 427-residue chain is UBX domain-containing protein 2 (427 aa).

Disordered regions lie at residues 115 to 143 and 273 to 331; these read FDQSPSQIPFPSSNTEDSSEESDSSSRAS and ETSG…GVAD. Positions 311-326 are enriched in low complexity; the sequence is STTESQGESSSQQAES. The UBX domain maps to 349 to 425; it reads PGPNVTRIQI…GIQNTALQFE (77 aa). Position 371 is a phosphoserine (Ser-371).

In terms of assembly, interacts with cdc48.

Its function is as follows. Involved in CDC48-dependent protein degradation through the ubiquitin/proteasome pathway. The protein is UBX domain-containing protein 2 (ubx2) of Schizosaccharomyces pombe (strain 972 / ATCC 24843) (Fission yeast).